Here is a 161-residue protein sequence, read N- to C-terminus: Dihydrofolate reductase (161 aa).

The 160-residue stretch at Lys-2–Arg-161 folds into the DHFR domain. Ile-6–Ala-8 is a binding site for substrate. Residues Ser-7–Ala-8 and Ile-15–Lys-20 contribute to the NADP(+) site. Asp-28 contacts substrate. Gly-44 to Thr-47 serves as a coordination point for NADP(+). Arg-59 is a binding site for substrate. NADP(+) contacts are provided by residues Ile-64–His-66 and Ile-96–Ile-101. Thr-115 contributes to the substrate binding site.

Belongs to the dihydrofolate reductase family.

The enzyme catalyses (6S)-5,6,7,8-tetrahydrofolate + NADP(+) = 7,8-dihydrofolate + NADPH + H(+). The protein operates within cofactor biosynthesis; tetrahydrofolate biosynthesis; 5,6,7,8-tetrahydrofolate from 7,8-dihydrofolate: step 1/1. Functionally, key enzyme in folate metabolism. Catalyzes an essential reaction for de novo glycine and purine synthesis, and for DNA precursor synthesis. This chain is Dihydrofolate reductase (folA), found in Buchnera aphidicola subsp. Schizaphis graminum (strain Sg).